A 429-amino-acid chain; its full sequence is Enolase (429 aa).

Position 167 (Gln-167) interacts with (2R)-2-phosphoglycerate. Glu-209 functions as the Proton donor in the catalytic mechanism. Mg(2+) is bound by residues Asp-246, Glu-289, and Asp-316. (2R)-2-phosphoglycerate is bound by residues Lys-341, Arg-370, Ser-371, and Lys-392. Lys-341 acts as the Proton acceptor in catalysis.

Belongs to the enolase family. As to quaternary structure, component of the RNA degradosome, a multiprotein complex involved in RNA processing and mRNA degradation. Requires Mg(2+) as cofactor.

It localises to the cytoplasm. Its subcellular location is the secreted. It is found in the cell surface. The catalysed reaction is (2R)-2-phosphoglycerate = phosphoenolpyruvate + H2O. It functions in the pathway carbohydrate degradation; glycolysis; pyruvate from D-glyceraldehyde 3-phosphate: step 4/5. Its function is as follows. Catalyzes the reversible conversion of 2-phosphoglycerate (2-PG) into phosphoenolpyruvate (PEP). It is essential for the degradation of carbohydrates via glycolysis. The chain is Enolase from Ectopseudomonas mendocina (strain ymp) (Pseudomonas mendocina).